Consider the following 511-residue polypeptide: 2-isopropylmalate synthase (511 aa).

Residues 4-266 form the Pyruvate carboxyltransferase domain; it reads IRIFDTTLRD…ETGIDLSQLY (263 aa). Residues aspartate 13, histidine 201, histidine 203, and asparagine 237 each contribute to the Mn(2+) site. Positions 391-511 are regulatory domain; that stretch reads VLEKIRVVSG…IAANARAQKN (121 aa).

This sequence belongs to the alpha-IPM synthase/homocitrate synthase family. LeuA type 1 subfamily. As to quaternary structure, homodimer. Mn(2+) serves as cofactor.

The protein resides in the cytoplasm. The enzyme catalyses 3-methyl-2-oxobutanoate + acetyl-CoA + H2O = (2S)-2-isopropylmalate + CoA + H(+). It participates in amino-acid biosynthesis; L-leucine biosynthesis; L-leucine from 3-methyl-2-oxobutanoate: step 1/4. Functionally, catalyzes the condensation of the acetyl group of acetyl-CoA with 3-methyl-2-oxobutanoate (2-ketoisovalerate) to form 3-carboxy-3-hydroxy-4-methylpentanoate (2-isopropylmalate). The polypeptide is 2-isopropylmalate synthase (Acetivibrio thermocellus (strain ATCC 27405 / DSM 1237 / JCM 9322 / NBRC 103400 / NCIMB 10682 / NRRL B-4536 / VPI 7372) (Clostridium thermocellum)).